We begin with the raw amino-acid sequence, 457 residues long: UDP-N-acetylglucosamine 1-carboxyvinyltransferase (457 aa).

Residue 34–35 participates in phosphoenolpyruvate binding; sequence KN. Position 104 (Arg-104) interacts with UDP-N-acetyl-alpha-D-glucosamine. Cys-128 (proton donor) is an active-site residue. Cys-128 bears the 2-(S-cysteinyl)pyruvic acid O-phosphothioketal mark. The UDP-N-acetyl-alpha-D-glucosamine site is built by Asp-319 and Ile-341. The tract at residues 436–457 is disordered; sequence INKSKNRSSNSKLKEVSEIRAA. Residues 447–457 are compositionally biased toward basic and acidic residues; the sequence is KLKEVSEIRAA.

The protein belongs to the EPSP synthase family. MurA subfamily.

The protein resides in the cytoplasm. The catalysed reaction is phosphoenolpyruvate + UDP-N-acetyl-alpha-D-glucosamine = UDP-N-acetyl-3-O-(1-carboxyvinyl)-alpha-D-glucosamine + phosphate. Its pathway is cell wall biogenesis; peptidoglycan biosynthesis. In terms of biological role, cell wall formation. Adds enolpyruvyl to UDP-N-acetylglucosamine. In Prochlorococcus marinus subsp. pastoris (strain CCMP1986 / NIES-2087 / MED4), this protein is UDP-N-acetylglucosamine 1-carboxyvinyltransferase.